A 450-amino-acid polypeptide reads, in one-letter code: MEEPQKNDLSMREQEEEHPVRSSGPQISVSEFSCHCCYDTLVNPTTLNCGHSFCRHCLALWWMSSKKTECPECREKWEGFPKVNILLRDAIEKLFPDAIRMRVEDIQQNNDVVQSLAAFQKYGNDQNPLAPSTGRVNPQRGGGFFSGVLTALTGVAVILLVYHWRSRESEHGLLVHKAVDKWTMEEVVLWLEQLGPWASLYRDRFLSERVNGRLLLTLTEEEFSRAPYTIENSSHRRVILTELERVRALGVKPPQNLWEYKAVNPGRSLFLLYALKSSPRLGLLYLYLFDYTDCFLPFIHTICPLQENSSGEDIFTKLLDLREPTWKQWREFLVKYSFLPYQLIAEFAWDWLEVHYWTSRFLIVNAVLLSVLELFSFWRIWSRSELKTVPQRMWSHFWKVSTQGLFMAMFWPLIPQFVCNCLFYWALYFNPIINIDLVVKEVRRLETQVL.

Residues 1 to 20 (MEEPQKNDLSMREQEEEHPV) show a composition bias toward basic and acidic residues. The disordered stretch occupies residues 1–25 (MEEPQKNDLSMREQEEEHPVRSSGP). Residues 1–140 (MEEPQKNDLS…PSTGRVNPQR (140 aa)) lie on the Cytoplasmic side of the membrane. Residues 34–74 (CHCCYDTLVNPTTLNCGHSFCRHCLALWWMSSKKTECPECR) form an RING-type zinc finger. The chain crosses the membrane as a helical span at residues 141-161 (GGGFFSGVLTALTGVAVILLV). Residues 162–331 (YHWRSRESEH…REPTWKQWRE (170 aa)) lie on the Extracellular side of the membrane. Residues 182–249 (WTMEEVVLWL…LTELERVRAL (68 aa)) form the SAM domain. 2 N-linked (GlcNAc...) asparagine glycosylation sites follow: Asn232 and Asn308. The chain crosses the membrane as a helical span at residues 332-352 (FLVKYSFLPYQLIAEFAWDWL). At 353–360 (EVHYWTSR) the chain is on the cytoplasmic side. A helical membrane pass occupies residues 361 to 381 (FLIVNAVLLSVLELFSFWRIW). The Extracellular segment spans residues 382–404 (SRSELKTVPQRMWSHFWKVSTQG). A helical transmembrane segment spans residues 405 to 425 (LFMAMFWPLIPQFVCNCLFYW). Residues 426–450 (ALYFNPIINIDLVVKEVRRLETQVL) lie on the Cytoplasmic side of the membrane.

In terms of assembly, interacts with CASP8, BCL2 and BCL2L1 through SAM domain and also with HIP1, IFT57, ESRRBL1 and BCAP31. Interacts with NGFR; this interaction inhibits NF-kappa-B and JNK-related signaling pathways. In terms of processing, mediates RING-dependent self-ubiquitination leading to proteasomal degradation.

It localises to the endoplasmic reticulum membrane. It catalyses the reaction S-ubiquitinyl-[E2 ubiquitin-conjugating enzyme]-L-cysteine + [acceptor protein]-L-lysine = [E2 ubiquitin-conjugating enzyme]-L-cysteine + N(6)-ubiquitinyl-[acceptor protein]-L-lysine.. Functionally, membrane-bound E3 ubiquitin ligase that plays a role in several processes including apoptosis regulation or reticulum endoplasmic stress. Has anti-apoptotic activity, both for apoptosis triggered via death-receptors and via mitochondrial factors. Contributes to the dynamic control of IRE1/ERN1 signaling during ER stress by inducing BAX inhibitor 1/TMBIM6 proteasomal degradation. Promotes the activation of TGF-beta signaling by mediating the 'Lys-63'-linked ubiquitination of TGFBR1 which is critical to activate the pathway. Together with NGFR, negatively regulates NF-kappa-B and JNK-related signaling pathways. Promotes the proteasome-mediated degradation of PNPLA3, a protein involveld in lipid metabolism. The polypeptide is Bifunctional apoptosis regulator (Bfar) (Mus musculus (Mouse)).